The sequence spans 185 residues: Large ribosomal subunit protein uL22 (185 aa).

Belongs to the universal ribosomal protein uL22 family. Part of the 50S ribosomal subunit.

This protein binds specifically to 23S rRNA. It makes multiple contacts with different domains of the 23S rRNA in the assembled 50S subunit and ribosome. Functionally, the globular domain of the protein is located near the polypeptide exit tunnel on the outside of the subunit, while an extended beta-hairpin is found that lines the wall of the exit tunnel in the center of the 70S ribosome. The protein is Large ribosomal subunit protein uL22 of Pyrobaculum islandicum (strain DSM 4184 / JCM 9189 / GEO3).